The chain runs to 446 residues: uncharacterized protein (446 aa).

2 disordered regions span residues 63 to 95 (KNKPHDLKNPKRSVSFKYKPNNSRSDLEESDLR) and 155 to 232 (AESS…HPVK). The segment covering 156 to 169 (ESSVPTPKLTNESN) has biased composition (polar residues). Basic and acidic residues-rich tracts occupy residues 182 to 199 (DQHESRTKKSMHSTDHSA) and 213 to 227 (ITKESELTRNDEARK).

This is an uncharacterized protein from Mus musculus (Mouse).